A 119-amino-acid chain; its full sequence is uncharacterized protein (119 aa).

The first 26 residues, 1–26, serve as a signal peptide directing secretion; it reads MNKLKRLSMLTVMIASVFIFSSHALA. One can recognise an SH3b domain in the interval 30-104; that stretch reads YTVSTSSGAP…IVPGFVSDTY (75 aa).

The protein to B.subtilis YraJ.

This is an uncharacterized protein from Bacillus subtilis (strain 168).